Reading from the N-terminus, the 243-residue chain is Pyridoxine 5'-phosphate synthase (243 aa).

Asparagine 6 lines the 3-amino-2-oxopropyl phosphate pocket. 8 to 9 contacts 1-deoxy-D-xylulose 5-phosphate; that stretch reads DH. Arginine 17 contacts 3-amino-2-oxopropyl phosphate. Histidine 42 acts as the Proton acceptor in catalysis. Arginine 44 and histidine 49 together coordinate 1-deoxy-D-xylulose 5-phosphate. The active-site Proton acceptor is the glutamate 72. Residue threonine 102 participates in 1-deoxy-D-xylulose 5-phosphate binding. Residue histidine 192 is the Proton donor of the active site. 3-amino-2-oxopropyl phosphate contacts are provided by residues glycine 193 and 214-215; that span reads GH.

The protein belongs to the PNP synthase family. As to quaternary structure, homooctamer; tetramer of dimers.

The protein resides in the cytoplasm. It catalyses the reaction 3-amino-2-oxopropyl phosphate + 1-deoxy-D-xylulose 5-phosphate = pyridoxine 5'-phosphate + phosphate + 2 H2O + H(+). The protein operates within cofactor biosynthesis; pyridoxine 5'-phosphate biosynthesis; pyridoxine 5'-phosphate from D-erythrose 4-phosphate: step 5/5. Catalyzes the complicated ring closure reaction between the two acyclic compounds 1-deoxy-D-xylulose-5-phosphate (DXP) and 3-amino-2-oxopropyl phosphate (1-amino-acetone-3-phosphate or AAP) to form pyridoxine 5'-phosphate (PNP) and inorganic phosphate. This Sulfurihydrogenibium sp. (strain YO3AOP1) protein is Pyridoxine 5'-phosphate synthase.